We begin with the raw amino-acid sequence, 220 residues long: Ribosomal RNA small subunit methyltransferase Nep1 (220 aa).

S-adenosyl-L-methionine-binding positions include glycine 178, glycine 183, and isoleucine 196–leucine 201.

The protein belongs to the class IV-like SAM-binding methyltransferase superfamily. RNA methyltransferase NEP1 family. Homodimer.

It catalyses the reaction a pseudouridine in rRNA + S-adenosyl-L-methionine = an N(1)-methylpseudouridine in rRNA + S-adenosyl-L-homocysteine + H(+). Its function is as follows. Methyltransferase involved in ribosomal biogenesis. Specifically catalyzes the N1-methylation of the pseudouridine corresponding to position 914 in M.jannaschii 16S rRNA. This chain is Ribosomal RNA small subunit methyltransferase Nep1, found in Thermococcus sibiricus (strain DSM 12597 / MM 739).